We begin with the raw amino-acid sequence, 381 residues long: Flagellar P-ring protein (381 aa).

Residues 1–33 form the signal peptide; the sequence is MQFFNTLHPTRPHWLLAALCLIASLLGAGTAQA.

This sequence belongs to the FlgI family. In terms of assembly, the basal body constitutes a major portion of the flagellar organelle and consists of four rings (L,P,S, and M) mounted on a central rod.

Its subcellular location is the periplasm. The protein localises to the bacterial flagellum basal body. Assembles around the rod to form the L-ring and probably protects the motor/basal body from shearing forces during rotation. In Albidiferax ferrireducens (strain ATCC BAA-621 / DSM 15236 / T118) (Rhodoferax ferrireducens), this protein is Flagellar P-ring protein.